A 179-amino-acid polypeptide reads, in one-letter code: Inosine/xanthosine triphosphatase (179 aa).

8–13 contacts substrate; the sequence is TTNPAK. 2 residues coordinate Mg(2+): D38 and E68. Position 68-69 (68-69) interacts with substrate; it reads EA.

This sequence belongs to the YjjX NTPase family. Homodimer. Mg(2+) is required as a cofactor. Requires Mn(2+) as cofactor.

The catalysed reaction is XTP + H2O = XDP + phosphate + H(+). It carries out the reaction ITP + H2O = IDP + phosphate + H(+). Phosphatase that hydrolyzes non-canonical purine nucleotides such as XTP and ITP to their respective diphosphate derivatives. Probably excludes non-canonical purines from DNA/RNA precursor pool, thus preventing their incorporation into DNA/RNA and avoiding chromosomal lesions. In Pectobacterium carotovorum subsp. carotovorum (strain PC1), this protein is Inosine/xanthosine triphosphatase.